The following is a 375-amino-acid chain: Arabinose metabolism transcriptional repressor (375 aa).

An HTH gntR-type domain is found at 1 to 70 (METKYNFVKQ…QGAGTFCADR (70 aa)). The H-T-H motif DNA-binding region spans 30–49 (ENELMKEYNVSRHTVRKAID).

It localises to the cytoplasm. Functionally, transcriptional repressor of the arabinose utilization genes. The protein is Arabinose metabolism transcriptional repressor (araR) of Halalkalibacterium halodurans (strain ATCC BAA-125 / DSM 18197 / FERM 7344 / JCM 9153 / C-125) (Bacillus halodurans).